The following is a 193-amino-acid chain: Putative deoxynucleotide monophosphate kinase (193 aa).

Lysine 10 lines the dGMP pocket. Glycine 13 and threonine 16 together coordinate ATP. Residues leucine 36, lysine 37, lysine 58, aspartate 122, arginine 124, glutamate 128, and serine 155 each coordinate dGMP.

The protein belongs to the dNMP kinase family.

The enzyme catalyses a 2'-deoxyribonucleoside 5'-phosphate + ATP = a 2'-deoxyribonucleoside 5'-diphosphate + ADP. The chain is Putative deoxynucleotide monophosphate kinase from Acanthamoeba polyphaga mimivirus (APMV).